The following is a 209-amino-acid chain: Na(+)-translocating NADH-quinone reductase subunit D (209 aa).

The next 5 membrane-spanning stretches (helical) occupy residues 42–62, 66–86, 95–115, 131–151, and 178–198; these read VVMT…ISLI, IPNS…VIVV, FEIS…CIVM, FMDG…VGFL, and NGLF…IWAL.

This sequence belongs to the NqrDE/RnfAE family. Composed of six subunits; NqrA, NqrB, NqrC, NqrD, NqrE and NqrF.

The protein resides in the cell inner membrane. It catalyses the reaction a ubiquinone + n Na(+)(in) + NADH + H(+) = a ubiquinol + n Na(+)(out) + NAD(+). Functionally, NQR complex catalyzes the reduction of ubiquinone-1 to ubiquinol by two successive reactions, coupled with the transport of Na(+) ions from the cytoplasm to the periplasm. NqrA to NqrE are probably involved in the second step, the conversion of ubisemiquinone to ubiquinol. This chain is Na(+)-translocating NADH-quinone reductase subunit D, found in Serratia proteamaculans (strain 568).